A 616-amino-acid chain; its full sequence is Fatty acyl-CoA reductase 2, chloroplastic (616 aa).

The transit peptide at 1-14 directs the protein to the chloroplast; it reads MEALFLSSSSSSIV. The NAD(P)H-binding signature appears at 133–143; sequence FLITGSTGFLA. Residues Y357 and K361 contribute to the active site.

It belongs to the fatty acyl-CoA reductase family. As to expression, expressed in the tapetum of anthers.

The protein localises to the plastid. It localises to the chloroplast. It catalyses the reaction a long-chain fatty acyl-CoA + 2 NADPH + 2 H(+) = a long-chain primary fatty alcohol + 2 NADP(+) + CoA. It carries out the reaction hexadecanoyl-CoA + 2 NADPH + 2 H(+) = hexadecan-1-ol + 2 NADP(+) + CoA. The enzyme catalyses hexadecanoyl-[ACP] + 2 NADPH + 2 H(+) = hexadecan-1-ol + holo-[ACP] + 2 NADP(+). Functionally, catalyzes the reduction of fatty acyl-CoA and -ACP (acyl carrier protein) substrates to fatty alcohols. Triggers the accumulation of C16 and C18 fatty alcohols; converts palmitoyl-acyl carrier protein to the corresponding C16:0 alcohol with NAD(P)H as electron donor, but seems inactive toward palmitoyl- or other acyl-coenzyme A. Also triggers the formation of some C16:0 aldehydes. Involved in the synthesis of the lipid component in sporopollenin. Required for exine patterning of pollen grain by mediating the formation of pollen wall substances. The sequence is that of Fatty acyl-CoA reductase 2, chloroplastic from Arabidopsis thaliana (Mouse-ear cress).